Here is a 142-residue protein sequence, read N- to C-terminus: Peptide methionine sulfoxide reductase MsrB (142 aa).

A MsrB domain is found at 2–125 (IKKNKEELND…NSAAIQFIPY (124 aa)). Cysteine 114 serves as the catalytic Nucleophile.

The protein belongs to the MsrB Met sulfoxide reductase family.

The catalysed reaction is L-methionyl-[protein] + [thioredoxin]-disulfide + H2O = L-methionyl-(R)-S-oxide-[protein] + [thioredoxin]-dithiol. This is Peptide methionine sulfoxide reductase MsrB from Staphylococcus epidermidis (strain ATCC 35984 / DSM 28319 / BCRC 17069 / CCUG 31568 / BM 3577 / RP62A).